The primary structure comprises 350 residues: Flap endonuclease 1 (350 aa).

Positions 1-102 (MGVTALRELI…REIERRQKLK (102 aa)) are N-domain. Mg(2+) contacts are provided by Asp-31, Asp-84, Glu-156, Glu-158, Asp-177, Asp-179, and Asp-240. The segment at 120-261 (EARKYAQMSA…TALRYVKSYG (142 aa)) is I-domain. Residues 339 to 347 (KQSTLDMFF) are interaction with PCNA.

Belongs to the XPG/RAD2 endonuclease family. FEN1 subfamily. In terms of assembly, interacts with PCNA. PCNA stimulates the nuclease activity without altering cleavage specificity. Mg(2+) is required as a cofactor.

Structure-specific nuclease with 5'-flap endonuclease and 5'-3' exonuclease activities involved in DNA replication and repair. During DNA replication, cleaves the 5'-overhanging flap structure that is generated by displacement synthesis when DNA polymerase encounters the 5'-end of a downstream Okazaki fragment. Binds the unpaired 3'-DNA end and kinks the DNA to facilitate 5' cleavage specificity. Cleaves one nucleotide into the double-stranded DNA from the junction in flap DNA, leaving a nick for ligation. Also involved in the base excision repair (BER) pathway. Acts as a genome stabilization factor that prevents flaps from equilibrating into structures that lead to duplications and deletions. Also possesses 5'-3' exonuclease activity on nicked or gapped double-stranded DNA. The protein is Flap endonuclease 1 of Ignicoccus hospitalis (strain KIN4/I / DSM 18386 / JCM 14125).